The following is a 3023-amino-acid chain: Genome polyprotein (3023 aa).

A compositionally biased stretch (basic residues) spans 1–21; sequence MSTLPKPKRQTKRNTLRRPKN. S2 bears the N-acetylserine; by host mark. The segment at 2–23 is interaction with STAT1; sequence STLPKPKRQTKRNTLRRPKNVK. The interval 2-58 is interaction with EIF2AK2/PKR; sequence STLPKPKRQTKRNTLRRPKNVKFPAGGQIVGEVYVLPRRGPQLGVREVRKTSERSQP. The interval 2–59 is interaction with DDX3X; the sequence is STLPKPKRQTKRNTLRRPKNVKFPAGGQIVGEVYVLPRRGPQLGVREVRKTSERSQPR. A disordered region spans residues 2 to 75; the sequence is STLPKPKRQT…PKARPREGRS (74 aa). At 2 to 168 the chain is on the cytoplasmic side; it reads STLPKPKRQT…EDGVNYATGN (167 aa). 2 consecutive short sequence motifs (nuclear localization signal) follow at residues 5–13 and 38–43; these read PKPKRQTKR and PRRGPQ. Over residues 47–57 the composition is skewed to basic and acidic residues; that stretch reads REVRKTSERSQ. Phosphoserine; by host is present on S53. 2 short sequence motifs (nuclear localization signal) span residues 58–64 and 66–71; these read PRGRRQP and PKARPR. The segment at 112 to 152 is important for endoplasmic reticulum and mitochondrial localization; sequence PRRRSRNLGKVIDTLTCGFADLMGYIPLIGAPVGGVARALA. S116 is modified (phosphoserine; by host). Residues 122-173 are interaction with APOA2; the sequence is VIDTLTCGFADLMGYIPLIGAPVGGVARALAHGVRALEDGVNYATGNLPGCS. Residues 164–167 are important for lipid droplets localization; it reads YATG. A helical transmembrane segment spans residues 169–189; that stretch reads LPGCSFSIFLLALFSCLTCPA. A propeptide spans 178 to 191 (ER anchor for the core protein, removed in mature form by host signal peptidase); that stretch reads LLALFSCLTCPASS. At 190–359 the chain is on the lumenal side; it reads SSLEYRNASG…VGAHWGVMAG (170 aa). 3 N-linked (GlcNAc...) asparagine; by host glycosylation sites follow: N196, N209, and N235. The interval 266-297 is important for fusion; that stretch reads LVAPPTLCSALYVEDAFGAVSLVGQAFTFRPR. N306 carries an N-linked (GlcNAc...) asparagine; by host glycan. Residues 360-380 traverse the membrane as a helical segment; it reads LAYFSMQGNWAKVVIVLIMFS. The Lumenal segment spans residues 381 to 733; the sequence is GVDATTHTTG…WEFVVLVFLL (353 aa). The interval 386–413 is HVR1; it reads THTTGGSAAQATAGFTSFFTRGPSQNLQ. N418, N424, and N431 each carry an N-linked (GlcNAc...) (high mannose) asparagine; by host glycan. Disulfide bonds link C430–C554, C453–C460, C488–C496, and C505–C510. Residue N449 is glycosylated (N-linked (GlcNAc...) asparagine; by host). The interval 476 to 480 is HVR2; sequence ANING. N477 carries N-linked (GlcNAc...) asparagine; by host glycosylation. The CD81-binding 1 stretch occupies residues 482–495; the sequence is SEDRPYCWHYPPRP. N534 is a glycosylation site (N-linked (GlcNAc...) asparagine; by host). The tract at residues 546-553 is CD81-binding 2; that stretch reads PPQGRWFG. Residue N558 is glycosylated (N-linked (GlcNAc...) asparagine; by host). Disulfide bonds link C566-C571, C589-C593, C605-C628, and C615-C652. 2 N-linked (GlcNAc...) (high mannose) asparagine; by host glycosylation sites follow: N631 and N653. Cysteines 660 and 685 form a disulfide. A PKR/eIF2-alpha phosphorylation homology domain (PePHD) region spans residues 668–679; sequence SEQQPLLHSTTD. The chain crosses the membrane as a helical span at residues 734–754; it reads LADARVCVALWMMLLISQAEA. Residues 755-765 are Lumenal-facing; the sequence is AMENLVMLNAL. The helical transmembrane segment at 766-786 threads the bilayer; sequence SAAGQQGYVWYLVAFCAAWHI. Residues 787–790 are Cytoplasmic-facing; the sequence is RGKL. A helical membrane pass occupies residues 791 to 811; the sequence is VPLITYGLTGLWPLALLDLLL. Topologically, residues 812 to 821 are lumenal; that stretch reads PQRAYAWTGE. The chain crosses the membrane as a helical span at residues 822–842; the sequence is DDATIGAGVLLLLGFFTLSPW. The Cytoplasmic segment spans residues 843 to 889; that stretch reads YKHWIGRLIWWNQYAICRGEAALQVWVPPLLVRGSRDSVILLASLLY. Residues 890 to 910 traverse the membrane as a helical segment; that stretch reads PSLIFDITKLLIAVLGPLYLI. The region spanning 907–1034 is the Peptidase C18 domain; it reads LYLIQAALTS…DYKKMGWRLL (128 aa). The Lumenal portion of the chain corresponds to 911–936; that stretch reads QAALTSTPYFVRAHVLIRICMLVRSA. A protease NS2-3 region spans residues 912 to 1214; that stretch reads AALTSTPYFV…PVETLSTQVR (303 aa). The S-palmitoyl cysteine; by host moiety is linked to residue C930. Residues 937–957 traverse the membrane as a helical segment; the sequence is MGGKYVQMAVLTVGRWFNTYL. The tract at residues 937–957 is interaction with host SCPS1; that stretch reads MGGKYVQMAVLTVGRWFNTYL. At 958-1665 the chain is on the cytoplasmic side; sequence YDHLSPIQDW…CMSADLEVTT (708 aa). Residues H960, E980, and C1001 each act as for protease NS2 activity; shared with dimeric partner in the active site. One can recognise a Peptidase S29 domain in the interval 1035–1216; it reads SPISAYAQQT…ETLSTQVRSP (182 aa). Residues H1091 and D1115 each act as charge relay system; for serine protease NS3 activity in the active site. Zn(2+) is bound by residues C1131 and C1133. The active-site Charge relay system; for serine protease NS3 activity is the S1173. Zn(2+)-binding residues include C1179 and H1183. One can recognise a Helicase ATP-binding domain in the interval 1225-1377; it reads PAVPESYQVG…PNIEEVGLTS (153 aa). Residue 1238-1245 participates in ATP binding; sequence APTGSGKS. Mg(2+)-binding residues include S1245 and E1325. The DECH box motif lies at 1324–1327; sequence DECH. One can recognise a Helicase C-terminal domain in the interval 1387-1546; that stretch reads ALPLAMIKGG…DLQPAETTVR (160 aa). The tract at residues 1494-1506 is RNA-binding; that stretch reads QRRGRTGRGRPGI. A helical transmembrane segment spans residues 1666–1686; that stretch reads SAWVLVGGVLAALAAYCLSVG. Residues 1687 to 1698 are NS3-binding; the sequence is CVVIVGHIELGG. Topologically, residues 1687 to 1813 are cytoplasmic; that stretch reads CVVIVGHIEL…SVTSPLTTNQ (127 aa). A helical membrane pass occupies residues 1814–1834; it reads TMFFNILGGWVATHLAGPAAS. The Lumenal portion of the chain corresponds to 1835-1836; it reads SA. Residues 1837-1857 traverse the membrane as a helical segment; the sequence is FVVSGLAGAAVGGIGIGRVLL. A topological domain (cytoplasmic) is located at residue D1858. The chain crosses the membrane as a helical span at residues 1859–1879; the sequence is VLAGYGAGVSGALVAFKIMGG. Residues 1880 to 1889 are Lumenal-facing; it reads ELPTTEDMVN. A helical transmembrane segment spans residues 1890–1910; it reads LLPAILSPGALVVGVICAAVL. The Cytoplasmic portion of the chain corresponds to 1911 to 1980; that stretch reads RRHVGPGEGA…WINEDYPSPC (70 aa). C1980 is lipidated: S-palmitoyl cysteine; by host. Residues 1981 to 2010 lie within the membrane without spanning it; the sequence is NGDWLHDIWDWVCIVLSDFKTWLSAKIMPK. Residues 2011 to 3002 are Cytoplasmic-facing; the sequence is VPGIPFLSCQ…YHSVSRARTR (992 aa). Zn(2+) contacts are provided by C2019, C2037, C2039, and C2060. The segment at 2128–2216 is FKBP8-binding; it reads EFFTELDGVR…ASSSASQLSA (89 aa). Positions 2128–2340 are transcriptional activation; that stretch reads EFFTELDGVR…PVPPPRRKRT (213 aa). The segment at 2143 to 2147 is interaction with non-structural protein 4A; that stretch reads PPCKP. Low complexity predominate over residues 2195–2218; sequence ARRLARGSPPSEASSSASQLSAPS. Residues 2195-2226 form a disordered region; the sequence is ARRLARGSPPSEASSSASQLSAPSLKATCQTH. The segment at 2197-2450 is interaction with host SKP2; it reads RLARGSPPSE…AIITPCSAEE (254 aa). S2202, S2205, S2209, S2212, S2215, and S2218 each carry phosphoserine; by host. An ISDR region spans residues 2218-2257; sequence SLKATCQTHRPHPDAELIDANLLWRQEMGSNITRVESETK. An interaction with EIF2AK2/PKR region spans residues 2218-2283; sequence SLKATCQTHR…TELSIPAECF (66 aa). The segment at 2257–2314 is NS4B-binding; the sequence is KVVILDSFEPLRAEEDDTELSIPAECFKKPPKYPPALPIWARPDYNPPLLPSWKDPTY. The tract at residues 2307-2385 is V3; the sequence is PSWKDPTYEP…GTESTAESGD (79 aa). Disordered regions lie at residues 2320–2344 and 2357–2422; these read HGCALPPTRPAPVPPPRRKRTIKLD and ERSF…STVS. The SH3-binding motif lies at 2330-2333; the sequence is APVP. Residues 2335–2343 carry the Nuclear localization signal motif; sequence PRRKRTIKL. Residues 2366–2384 are compositionally biased toward low complexity; the sequence is EGTGTSSSGVGTESTAESG. Phosphoserine; by host is present on residues S2461 and S2474. The RdRp catalytic domain maps to 2646–2764; the sequence is PLGFSYDTRC…ISESCGVEED (119 aa). Residues D2652, D2750, and D2751 each coordinate Mg(2+). The chain crosses the membrane as a helical span at residues 3003–3023; the sequence is HLLLCLLLLTVGVGIFLLPAR.

This sequence belongs to the hepacivirus polyprotein family. As to quaternary structure, homooligomer. Interacts with E1 (via C-terminus). Interacts with the non-structural protein 5A. Interacts (via N-terminus) with host STAT1 (via SH2 domain); this interaction results in decreased STAT1 phosphorylation and ubiquitin-mediated proteasome-dependent STAT1 degradation, leading to decreased IFN-stimulated gene transcription. Interacts with host STAT3; this interaction constitutively activates STAT3. Interacts with host LTBR receptor. Interacts with host TNFRSF1A receptor and possibly induces apoptosis. Interacts with host HNRPK. Interacts with host YWHAE. Interacts with host UBE3A/E6AP. Interacts with host DDX3X. Interacts with host APOA2. Interacts with host RXRA protein. Interacts with host SP110 isoform 3/Sp110b; this interaction sequesters the transcriptional corepressor SP110 away from the nucleus. Interacts with host CREB3 nuclear transcription protein; this interaction triggers cell transformation. Interacts with host ACY3. Interacts with host C1QR1. Interacts with host RBM24; this interaction, which enhances the interaction of the mature core protein with 5'-UTR, may inhibit viral translation and favor replication. Interacts with host EIF2AK2/PKR; this interaction induces the autophosphorylation of EIF2AK2. Part of the viral assembly initiation complex composed of NS2, E1, E2, NS3, NS4A, NS5A and the mature core protein. Forms a heterodimer with envelope glycoprotein E2. Interacts with mature core protein. Interacts with protease NS2. The heterodimer E1/E2 interacts with host CLDN1; this interaction plays a role in viral entry into host cell. Interacts with host SPSB2 (via C-terminus). Part of the viral assembly initiation complex composed of NS2, E1, E2, NS3, NS4A, NS5A and the mature core protein. Interacts with host NEURL3; this interaction prevents E1 binding to glycoprotein E2. In terms of assembly, forms a heterodimer with envelope glycoprotein E1. Interacts with host CD81 and SCARB1 receptors; these interactions play a role in viral entry into host cell. Interacts with host EIF2AK2/PKR; this interaction inhibits EIF2AK2 and probably allows the virus to evade the innate immune response. Interacts with host CD209/DC-SIGN and CLEC4M/DC-SIGNR. Interact with host SPCS1; this interaction is essential for viral particle assembly. Interacts with protease NS2. The heterodimer E1/E2 interacts with host CLDN1; this interaction plays a role in viral entry into host cell. Part of the viral assembly initiation complex composed of NS2, E1, E2, NS3, NS4A, NS5A and the mature core protein. Interacts with host SLC3A2/4F2hc; the interaction may facilitate viral entry into host cell. Interacts with human PLSCR1. As to quaternary structure, homohexamer. Homoheptamer. Interacts with protease NS2. Homodimer. Interacts with host SPCS1; this interaction is essential for viral particle assembly. Interacts with envelope glycoprotein E1. Interacts with envelope glycoprotein E2. Interacts with viroporin p7. Interacts with serine protease/helicase NS3. Part of the replication complex composed of NS2, NS3, NS4A, NS4B, NS5A and the RNA-directed RNA polymerase embedded in an ER-derived membranous web. Part of the viral assembly initiation complex composed of NS2, E1, E2, NS3, NS4A, NS5A and the mature core protein. In terms of assembly, interacts with protease NS2. Interacts with non-structural protein 4A; this interaction stabilizes the folding of NS3 serine protease. NS3-NS4A interaction is essential for NS3 activation and allows membrane anchorage of the latter. NS3/NS4A complex also prevents phosphorylation of host IRF3, thus preventing the establishment of dsRNA induced antiviral state. Interacts with host MAVS; this interaction leads to the cleavage and inhibition of host MAVS. Interacts with host TICAM1; this interaction leads to the cleavage and inhibition of host TICAM1. Interacts with host TANK-binding kinase/TBK1; this interaction results in the inhibition of the association between TBK1 and IRF3, which leads to the inhibition of IRF3 activation. Interacts with host RBM24. Part of the replication complex composed of NS2, NS3, NS4A, NS4B, NS5A and the RNA-directed RNA polymerase embedded in an ER-derived membranous web. Part of the viral assembly initiation complex composed of NS2, E1, E2, NS3, NS4A, NS5A and the mature core protein. As to quaternary structure, interacts with NS3 serine protease; this interaction stabilizes the folding of NS3 serine protease. NS3-NS4A interaction is essential for NS3 activation and allows membrane anchorage of the latter. Interacts with non-structural protein 5A (via N-terminus). Part of the replication complex composed of NS2, NS3, NS4A, NS4B, NS5A and the RNA-directed RNA polymerase embedded in an ER-derived membranous web. Part of the viral assembly initiation complex composed of NS2, E1, E2, NS3, NS4A, NS5A and the mature core protein. Homomultimer. Interacts with non-structural protein NS5A. Interacts with host PLA2G4C; this interaction likely initiates the recruitment of replication complexes to lipid droplets. Interacts with host STING; this interaction disrupts the interaction between STING and TBK1 thereby suppressing the interferon signaling. Part of the replication complex composed of NS2, NS3, NS4A, NS4B, NS5A and the RNA-directed RNA polymerase embedded in an ER-derived membranous web. In terms of assembly, monomer. Homodimer; dimerization is required for RNA-binding. Interacts with the mature core protein. Interacts (via N-terminus) with non-structural protein 4A. Interacts with non-structural protein 4B. Interacts (via region D2) with RNA-directed RNA polymerase. Part of the viral assembly initiation complex composed of NS2, E1, E2, NS3, NS4A, NS5A and the mature core protein. Part of the replication complex composed of NS2, NS3, NS4A, NS4B, NS5A and the RNA-directed RNA polymerase embedded in an ER-derived membranous web. Interacts with host GRB2. Interacts with host BIN1. Interacts with host PIK3R1. Interacts with host SRCAP. Interacts with host FKBP8. Interacts (via C-terminus) with host VAPB (via MSP domain). Interacts with host EIF2AK2/PKR; this interaction leads to disruption of EIF2AK2 dimerization by NS5A and probably allows the virus to evade the innate immune response. Interacts (via N-terminus) with host PACSIN2 (via N-terminus); this interaction attenuates protein kinase C alpha-mediated phosphorylation of PACSIN2 by disrupting the interaction between PACSIN2 and PRKCA. Interacts (via N-terminus) with host SRC kinase (via SH2 domain). Interacts with most Src-family kinases. Interacts with host IFI27 and SKP2; promotes the ubiquitin-mediated proteasomal degradation of NS5A. Interacts with host GPS2. Interacts with host TNFRSF21; this interaction allows the modulation by the virus of JNK, p38 MAPK, STAT3, and Akt signaling pathways in a DR6-dependent manner. Interacts (via N-terminus) with host CIDEB (via N-terminus); this interaction seems to regulate the association of HCV particles with APOE. Interacts with host CHKA/Choline Kinase-alpha; CHKA bridges host PI4KA and NS5A and potentiates NS5A-stimulated PI4KA activity, which then facilitates the targeting of the ternary complex to the ER for viral replication. Interacts with host SPSB2 (via C-terminus); this interaction targets NS5A for ubiquitination and degradation. Interacts with host RAB18; this interaction may promote the association of NS5A and other replicase components with lipid droplets. Interacts (via region D2) with host PPIA/CYPA; the interaction stimulates RNA-binding ability of NS5A and is dependent on the peptidyl-prolyl cis-trans isomerase activity of PPIA/CYPA. Interacts with host TRIM14; this interaction induces the degradation of NS5A. As to quaternary structure, homooligomer. Interacts with non-structural protein 5A. Interacts with host VAPB. Interacts with host PRK2/PKN2. Interacts with host HNRNPA1 and SEPT6; these interactions facilitate viral replication. Part of the replication complex composed of NS2, NS3, NS4A, NS4B, NS5A and the RNA-directed RNA polymerase. Zn(2+) is required as a cofactor. Mg(2+) serves as cofactor. In terms of processing, specific enzymatic cleavages in vivo yield mature proteins. The structural proteins, core, E1, E2 and p7 are produced by proteolytic processing by host signal peptidases. The core protein precursor is synthesized as a 23 kDa, which is retained in the ER membrane through the hydrophobic signal peptide. Cleavage by the signal peptidase releases the 21 kDa mature core protein. The cleavage of the core protein precursor occurs between aminoacids 176 and 188 but the exact cleavage site is not known. Some degraded forms of the core protein appear as well during the course of infection. The other proteins (p7, NS2, NS3, NS4A, NS4B, NS5A and NS5B) are cleaved by the viral proteases. Autoprocessing between NS2 and NS3 is mediated by the NS2 cysteine protease catalytic domain and regulated by the NS3 N-terminal domain. Phosphorylated by host PKC and PKA. Post-translationally, ubiquitinated; mediated by UBE3A and leading to core protein subsequent proteasomal degradation. In terms of processing, highly N-glycosylated. Palmitoylation is required for NS2/3 autoprocessing and E2 recruitment to membranes. Post-translationally, palmitoylated. This modification may play a role in its polymerization or in protein-protein interactions. In terms of processing, phosphorylated on serines in a basal form termed p56. p58 is a hyperphosphorylated form of p56. p56 and p58 coexist in the cell in roughly equivalent amounts. Hyperphosphorylation is dependent on the presence of NS4A. Host CSNK1A1/CKI-alpha or RPS6KB1 kinases may be responsible for NS5A phosphorylation. Tyrosine phosphorylation is essential for the interaction with host SRC. Post-translationally, the N-terminus is phosphorylated by host PRK2/PKN2.

It is found in the host endoplasmic reticulum membrane. Its subcellular location is the host mitochondrion membrane. It localises to the virion. The protein localises to the host cytoplasm. The protein resides in the host nucleus. It is found in the host lipid droplet. Its subcellular location is the virion membrane. It localises to the host mitochondrion. The protein localises to the host cell membrane. The protein resides in the host perinuclear region. The enzyme catalyses Hydrolysis of four peptide bonds in the viral precursor polyprotein, commonly with Asp or Glu in the P6 position, Cys or Thr in P1 and Ser or Ala in P1'.. The catalysed reaction is a ribonucleoside 5'-triphosphate + H2O = a ribonucleoside 5'-diphosphate + phosphate + H(+). It carries out the reaction ATP + H2O = ADP + phosphate + H(+). It catalyses the reaction RNA(n) + a ribonucleoside 5'-triphosphate = RNA(n+1) + diphosphate. Its activity is regulated as follows. Inhibited by the antiviral drug hexamethylene amiloride. Inhibition by amantadine appears to be genotype-dependent. Also inhibited by long-alkyl-chain iminosugar derivatives. With respect to regulation, activity is up-regulated by PRK2/PKN2-mediated phosphorylation. Functionally, packages viral RNA to form a viral nucleocapsid, and promotes virion budding. Participates in the viral particle production as a result of its interaction with the non-structural protein 5A. Binds RNA and may function as a RNA chaperone to induce the RNA structural rearrangements taking place during virus replication. Modulates viral translation initiation by interacting with viral IRES and 40S ribosomal subunit. Affects various cell signaling pathways, host immunity and lipid metabolism. Prevents the establishment of cellular antiviral state by blocking the interferon-alpha/beta (IFN-alpha/beta) and IFN-gamma signaling pathways and by blocking the formation of phosphorylated STAT1 and promoting ubiquitin-mediated proteasome-dependent degradation of STAT1. Activates STAT3 leading to cellular transformation. Regulates the activity of cellular genes, including c-myc and c-fos. May repress the promoter of p53, and sequester CREB3 and SP110 isoform 3/Sp110b in the cytoplasm. Represses cell cycle negative regulating factor CDKN1A, thereby interrupting an important check point of normal cell cycle regulation. Targets transcription factors involved in the regulation of inflammatory responses and in the immune response: suppresses TNF-induced NF-kappa-B activation, and activates AP-1. Binds to dendritic cells (DCs) via C1QR1, resulting in down-regulation of T-lymphocytes proliferation. Alters lipid metabolism by interacting with hepatocellular proteins involved in lipid accumulation and storage. Induces up-regulation of FAS promoter activity, and thereby contributes to the increased triglyceride accumulation in hepatocytes (steatosis). Its function is as follows. Forms a heterodimer with envelope glycoprotein E2, which mediates virus attachment to the host cell, virion internalization through clathrin-dependent endocytosis and fusion with host membrane. Fusion with the host cell is most likely mediated by both E1 and E2, through conformational rearrangements of the heterodimer required for fusion rather than a classical class II fusion mechanism. E1/E2 heterodimer binds host apolipoproteins such as APOB and ApoE thereby forming a lipo-viro-particle (LVP). APOE associated to the LVP allows the initial virus attachment to cell surface receptors such as the heparan sulfate proteoglycans (HSPGs), syndecan-1 (SDC1), syndecan-1 (SDC2), the low-density lipoprotein receptor (LDLR) and scavenger receptor class B type I (SCARB1). The cholesterol transfer activity of SCARB1 allows E2 exposure and binding of E2 to SCARB1 and the tetraspanin CD81. E1/E2 heterodimer binding on CD81 activates the epithelial growth factor receptor (EGFR) signaling pathway. Diffusion of the complex E1-E2-EGFR-SCARB1-CD81 to the cell lateral membrane allows further interaction with Claudin 1 (CLDN1) and occludin (OCLN) to finally trigger HCV entry. Forms a heterodimer with envelope glycoprotein E1, which mediates virus attachment to the host cell, virion internalization through clathrin-dependent endocytosis and fusion with host membrane. Fusion with the host cell is most likely mediated by both E1 and E2, through conformational rearrangements of the heterodimer required for fusion rather than a classical class II fusion mechanism. The interaction between envelope glycoprotein E2 and host apolipoprotein E/APOE allows the proper assembly, maturation and infectivity of the viral particles. This interaction is probably promoted via the up-regulation of cellular autophagy by the virus. E1/E2 heterodimer binds host apolipoproteins such as APOB and APOE thereby forming a lipo-viro-particle (LVP). APOE associated to the LVP allows the initial virus attachment to cell surface receptors such as the heparan sulfate proteoglycans (HSPGs), syndecan-1 (SDC1), syndecan-1 (SDC2), the low-density lipoprotein receptor (LDLR) and scavenger receptor class B type I (SCARB1). The cholesterol transfer activity of SCARB1 allows E2 exposure and binding of E2 to SCARB1 and the tetraspanin CD81. E1/E2 heterodimer binding on CD81 activates the epithelial growth factor receptor (EGFR) signaling pathway. Diffusion of the complex E1-E2-EGFR-SCARB1-CD81 to the cell lateral membrane allows further interaction with Claudin 1 (CLDN1) and occludin (OCLN) to finally trigger HCV entry. Inhibits host EIF2AK2/PKR activation, preventing the establishment of an antiviral state. Viral ligand for CD209/DC-SIGN and CLEC4M/DC-SIGNR, which are respectively found on dendritic cells (DCs), and on liver sinusoidal endothelial cells and macrophage-like cells of lymph node sinuses. These interactions allow the capture of circulating HCV particles by these cells and subsequent facilitated transmission to permissive cells such as hepatocytes and lymphocyte subpopulations. The interaction between E2 and host amino acid transporter complex formed by SLC3A2 and SLC7A5/LAT1 may facilitate viral entry into host cell. In terms of biological role, ion channel protein that acts as a viroporin and plays an essential role in the assembly, envelopment and secretion of viral particles. Regulates the host cell secretory pathway, which induces the intracellular retention of viral glycoproteins and favors assembly of viral particles. Creates a pore in acidic organelles and releases Ca(2+) and H(+) in the cytoplasm of infected cells, leading to a productive viral infection. High levels of cytoplasmic Ca(2+) may trigger membrane trafficking and transport of viral ER-associated proteins to viroplasms, sites of viral genome replication. This ionic imbalance induces the assembly of the inflammasome complex, which triggers the maturation of pro-IL-1beta into IL-1beta through the action of caspase-1. Targets also host mitochondria and induces mitochondrial depolarization. In addition of its role as a viroporin, acts as a lipid raft adhesion factor. Functionally, cysteine protease required for the proteolytic auto-cleavage between the non-structural proteins NS2 and NS3. The N-terminus of NS3 is required for the function of NS2 protease (active region NS2-3). Promotes the initiation of viral particle assembly by mediating the interaction between structural and non-structural proteins. Its function is as follows. Displays three enzymatic activities: serine protease with a chymotrypsin-like fold, NTPase and RNA helicase. NS3 serine protease, in association with NS4A, is responsible for the cleavages of NS3-NS4A, NS4A-NS4B, NS4B-NS5A and NS5A-NS5B. The NS3/NS4A complex prevents phosphorylation of host IRF3, thus preventing the establishment of dsRNA induced antiviral state. The NS3/NS4A complex induces host amino acid transporter component SLC3A2, thus contributing to HCV propagation. NS3 RNA helicase binds to RNA and unwinds both dsDNA and dsRNA in the 3' to 5' direction, and likely resolves RNA complicated stable secondary structures in the template strand. Binds a single ATP and catalyzes the unzipping of a single base pair of dsRNA. Inhibits host antiviral proteins TBK1 and IRF3 thereby preventing the establishment of an antiviral state. Cleaves host MAVS/CARDIF thereby preventing the establishment of an antiviral state. Cleaves host TICAM1/TRIF, thereby disrupting TLR3 signaling and preventing the establishment of an antiviral state. Peptide cofactor which forms a non-covalent complex with the N-terminal of NS3 serine protease. The NS3/NS4A complex prevents phosphorylation of host IRF3, thus preventing the establishment of dsRNA induced antiviral state. The NS3/NS4A complex induces host amino acid transporter component SLC3A2, thus contributing to HCV propagation. In terms of biological role, induces a specific membrane alteration that serves as a scaffold for the virus replication complex. This membrane alteration gives rise to the so-called ER-derived membranous web that contains the replication complex. NS4B self-interaction contributes to its function in membranous web formation. Promotes host TRIF protein degradation in a CASP8-dependent manner thereby inhibiting host TLR3-mediated interferon signaling. Disrupts the interaction between STING and TBK1 contributing to the inhibition of interferon signaling. Functionally, phosphorylated protein that is indispensable for viral replication and assembly. Both hypo- and hyperphosphorylated states are required for the viral life cycle. The hyperphosphorylated form of NS5A is an inhibitor of viral replication. Involved in RNA-binding and especially in binding to the viral genome. Zinc is essential for RNA-binding. Participates in the viral particle production as a result of its interaction with the mature viral core protein. Its interaction with host VAPB may target the viral replication complex to vesicles. Down-regulates viral IRES translation initiation. Mediates interferon resistance, presumably by interacting with and inhibiting host EIF2AK2/PKR. Prevents BIN1-induced apoptosis. Acts as a transcriptional activator of some host genes important for viral replication when localized in the nucleus. Via the interaction with host PACSIN2, modulates lipid droplet formation in order to promote virion assembly. Modulates TNFRSF21/DR6 signaling pathway for viral propagation. Its function is as follows. RNA-dependent RNA polymerase that performs primer-template recognition and RNA synthesis during viral replication. Initiates RNA transcription/replication at a flavin adenine dinucleotide (FAD), resulting in a 5'- FAD cap on viral RNAs. In this way, recognition of viral 5' RNA by host pattern recognition receptors can be bypassed, thereby evading activation of antiviral pathways. This is Genome polyprotein from Homo sapiens (Human).